A 104-amino-acid polypeptide reads, in one-letter code: Class I hydrophobin 12 (104 aa).

The N-terminal stretch at 1–25 (MFSKATLFFTAAVVIVAAGATPTTS) is a signal peptide. 4 disulfides stabilise this stretch: Cys27–Cys85, Cys34–Cys79, Cys35–Cys67, and Cys86–Cys99.

It belongs to the fungal hydrophobin family. Self-assembles to form functional amyloid fibrils called rodlets. Self-assembly into fibrillar rodlets occurs spontaneously at hydrophobic:hydrophilic interfaces and the rodlets further associate laterally to form amphipathic monolayers.

It is found in the secreted. Its subcellular location is the cell wall. Functionally, aerial growth, conidiation, and dispersal of filamentous fungi in the environment rely upon a capability of their secreting small amphipathic proteins called hydrophobins (HPBs) with low sequence identity. Class I can self-assemble into an outermost layer of rodlet bundles on aerial cell surfaces, conferring cellular hydrophobicity that supports fungal growth, development and dispersal; whereas Class II form highly ordered films at water-air interfaces through intermolecular interactions but contribute nothing to the rodlet structure. Hydph12 is a class I hydrophobin involved in the formation of mycelium knots. This is Class I hydrophobin 12 from Pleurotus ostreatus (strain PC15) (Oyster mushroom).